Here is a 70-residue protein sequence, read N- to C-terminus: Large ribosomal subunit protein bL31 (70 aa).

It belongs to the bacterial ribosomal protein bL31 family. Type A subfamily. Part of the 50S ribosomal subunit.

Functionally, binds the 23S rRNA. The sequence is that of Large ribosomal subunit protein bL31 from Mycoplasma mobile (strain ATCC 43663 / 163K / NCTC 11711) (Mesomycoplasma mobile).